Reading from the N-terminus, the 273-residue chain is Large ribosomal subunit protein uL2 (273 aa).

Positions 224-260 (AMNPVDHPHGGGEGKTSGGRHPVTPWGKKTKGKKTRK) are disordered. Residues 251 to 260 (KKTKGKKTRK) are compositionally biased toward basic residues.

The protein belongs to the universal ribosomal protein uL2 family. In terms of assembly, part of the 50S ribosomal subunit. Forms a bridge to the 30S subunit in the 70S ribosome.

One of the primary rRNA binding proteins. Required for association of the 30S and 50S subunits to form the 70S ribosome, for tRNA binding and peptide bond formation. It has been suggested to have peptidyltransferase activity; this is somewhat controversial. Makes several contacts with the 16S rRNA in the 70S ribosome. The sequence is that of Large ribosomal subunit protein uL2 from Orientia tsutsugamushi (strain Ikeda) (Rickettsia tsutsugamushi).